A 61-amino-acid chain; its full sequence is Small ribosomal subunit protein uS14 (61 aa).

Zn(2+) is bound by residues Cys24, Cys27, Cys40, and Cys43.

The protein belongs to the universal ribosomal protein uS14 family. Zinc-binding uS14 subfamily. Part of the 30S ribosomal subunit. Contacts proteins S3 and S10. Zn(2+) is required as a cofactor.

In terms of biological role, binds 16S rRNA, required for the assembly of 30S particles and may also be responsible for determining the conformation of the 16S rRNA at the A site. The polypeptide is Small ribosomal subunit protein uS14 (Frankia alni (strain DSM 45986 / CECT 9034 / ACN14a)).